A 424-amino-acid chain; its full sequence is Anaerobic glycerol-3-phosphate dehydrogenase subunit B (424 aa).

It belongs to the anaerobic G-3-P dehydrogenase subunit B family. As to quaternary structure, composed of a catalytic GlpA/B dimer and of membrane bound GlpC. FMN is required as a cofactor.

The catalysed reaction is a quinone + sn-glycerol 3-phosphate = dihydroxyacetone phosphate + a quinol. The protein operates within polyol metabolism; glycerol degradation via glycerol kinase pathway; glycerone phosphate from sn-glycerol 3-phosphate (anaerobic route): step 1/1. In terms of biological role, conversion of glycerol 3-phosphate to dihydroxyacetone. Uses fumarate or nitrate as electron acceptor. This is Anaerobic glycerol-3-phosphate dehydrogenase subunit B from Yersinia pestis bv. Antiqua (strain Antiqua).